The chain runs to 409 residues: tRNA-specific 2-thiouridylase MnmA (409 aa).

ATP is bound by residues 40–47 and Leu-66; that span reads GLSGGVDS. Cys-127 (nucleophile) is an active-site residue. Cys-127 and Cys-237 are oxidised to a cystine. Gly-152 provides a ligand contact to ATP. The interaction with tRNA stretch occupies residues 187-189; the sequence is KDQ. Cys-237 (cysteine persulfide intermediate) is an active-site residue. Residues 342–343 are interaction with tRNA; that stretch reads RY.

The protein belongs to the MnmA/TRMU family.

The protein localises to the cytoplasm. It catalyses the reaction S-sulfanyl-L-cysteinyl-[protein] + uridine(34) in tRNA + AH2 + ATP = 2-thiouridine(34) in tRNA + L-cysteinyl-[protein] + A + AMP + diphosphate + H(+). Its function is as follows. Catalyzes the 2-thiolation of uridine at the wobble position (U34) of tRNA, leading to the formation of s(2)U34. The protein is tRNA-specific 2-thiouridylase MnmA of Prochlorococcus marinus (strain MIT 9313).